We begin with the raw amino-acid sequence, 154 residues long: CASP-like protein 5B3 (154 aa).

Topologically, residues 1 to 17 (MKDVVGSPGTWSGMSLR) are cytoplasmic. Residues 18–38 (VSQCVFAGASVVAMASAYGFS) traverse the membrane as a helical segment. N-linked (GlcNAc...) asparagine glycosylation is present at asparagine 39. Topologically, residues 39–42 (NYTA) are extracellular. The helical transmembrane segment at 43–63 (FCYLIASMGLQLLWSFGLACL) threads the bilayer. Residues 64-77 (DIYSLQTKRDLHNP) lie on the Cytoplasmic side of the membrane. The helical transmembrane segment at 78–98 (VLVSLFVVGDWVTAILSFAAA) threads the bilayer. Topologically, residues 99 to 129 (SASAGVTILFERDVHFCRMYPQLSCGRYELS) are extracellular. The helical transmembrane segment at 130-150 (VILAFITWSFIATSAVSMFWL) threads the bilayer. At 151 to 154 (LASL) the chain is on the cytoplasmic side.

This sequence belongs to the Casparian strip membrane proteins (CASP) family. As to quaternary structure, homodimer and heterodimers.

It is found in the cell membrane. This Oryza sativa subsp. indica (Rice) protein is CASP-like protein 5B3.